Here is a 317-residue protein sequence, read N- to C-terminus: Electron transfer flavoprotein subunit alpha (317 aa).

It belongs to the ETF alpha-subunit/FixB family. Heterodimer of an alpha and a beta subunit. Requires FAD as cofactor.

It is found in the cytoplasm. Its pathway is lipid metabolism; butanoate metabolism. Its function is as follows. Part of an electron transfer flavoprotein involved in syntrophic growth of S.wolfei with butyrate. Probably receives electrons from butyryl-CoA dehydrogenases, and transfers them to the membrane-bound quinone oxidoreductase Swol_0698. This chain is Electron transfer flavoprotein subunit alpha, found in Syntrophomonas wolfei subsp. wolfei (strain DSM 2245B / Goettingen).